We begin with the raw amino-acid sequence, 525 residues long: G-protein regulator 2 (525 aa).

The GoLoco domain maps to proline 424–leucine 445. Residues threonine 489–lysine 525 form a disordered region.

Interacts with gpr-1; gpr-1 forms a complex with lin-5 and GDP-bound goa-1.

The protein resides in the cytoplasm. It localises to the cell cortex. Its subcellular location is the cytoskeleton. It is found in the spindle. In the 1-cell embryo, probably together with gpr-1, controls nuclear rotation and spindle elongation during mitosis. Complex of gpr-1 and gpr-2, in association with lin-5, activates G-protein signaling to affect mitotic spindle force. Polarity determinants (par genes) may regulate lin-5/gpr-1/gpr-2/goa-1 locally to create the asymmetric forces that drive spindle movement. The polypeptide is G-protein regulator 2 (gpr-2) (Caenorhabditis elegans).